The chain runs to 278 residues: Elongation factor Ts (278 aa).

Positions 82–85 are involved in Mg(2+) ion dislocation from EF-Tu; it reads TDFV.

This sequence belongs to the EF-Ts family.

The protein localises to the cytoplasm. Its function is as follows. Associates with the EF-Tu.GDP complex and induces the exchange of GDP to GTP. It remains bound to the aminoacyl-tRNA.EF-Tu.GTP complex up to the GTP hydrolysis stage on the ribosome. This is Elongation factor Ts (tsf) from Streptomyces coelicolor (strain ATCC BAA-471 / A3(2) / M145).